A 98-amino-acid polypeptide reads, in one-letter code: Co-chaperonin GroES 3 (98 aa).

The protein belongs to the GroES chaperonin family. Heptamer of 7 subunits arranged in a ring. Interacts with the chaperonin GroEL.

It is found in the cytoplasm. In terms of biological role, together with the chaperonin GroEL, plays an essential role in assisting protein folding. The GroEL-GroES system forms a nano-cage that allows encapsulation of the non-native substrate proteins and provides a physical environment optimized to promote and accelerate protein folding. GroES binds to the apical surface of the GroEL ring, thereby capping the opening of the GroEL channel. The chain is Co-chaperonin GroES 3 from Mesorhizobium japonicum (strain LMG 29417 / CECT 9101 / MAFF 303099) (Mesorhizobium loti (strain MAFF 303099)).